The chain runs to 956 residues: Nitrogen regulatory protein NUT1 (956 aa).

Residues 1–12 (MNPTITEHDFRF) show a composition bias toward basic and acidic residues. 5 disordered regions span residues 1–51 (MNPT…NDAQ), 120–222 (QQEE…PAAA), 240–262 (KTSI…FQVP), 348–373 (GQSI…SQVS), and 524–661 (TLPG…DAPT). A compositionally biased stretch (low complexity) spans 15–37 (RPAAPGRDPGSDSSDDPLPASLR). Composition is skewed to polar residues over residues 42–51 (DRQSAFNDAQ), 131–153 (PLKT…QKKS), 167–194 (SHGS…NAIS), and 208–217 (AAQSQFNPQS). The segment covering 588-613 (NASTTAIPNSQMQYEQQGVQGHTNSP) has biased composition (polar residues). 2 stretches are compositionally biased toward low complexity: residues 623 to 633 (SGFSSVVHSRP) and 640 to 661 (SKNG…DAPT). A GATA-type zinc finger spans residues 663-687 (CTNCATQTTPLWRRNPEGQPLCNAC). Residues 708-890 (KKRNRGSGSN…AATRPSGFGT (183 aa)) form a disordered region. Residues 713 to 760 (GSGSNVPGATSGSRSKKGATSTAVSGTNTRKNSSLAISRTASTTNVQV) are compositionally biased toward polar residues. The segment covering 812–839 (VVPIAAAPPKNMPGPGAAAAARTVALGP) has biased composition (low complexity). Polar residues-rich tracts occupy residues 849 to 863 (SPAN…NANH) and 872 to 881 (PENSTGSNEA).

The protein localises to the nucleus. Its function is as follows. Major nitrogen regulatory protein; activates expression of nitrogen-regulated genes. In Pyricularia oryzae (strain 70-15 / ATCC MYA-4617 / FGSC 8958) (Rice blast fungus), this protein is Nitrogen regulatory protein NUT1 (NUT1).